Here is a 97-residue protein sequence, read N- to C-terminus: Putative membrane protein insertion efficiency factor (97 aa).

This sequence belongs to the UPF0161 family.

The protein resides in the cell membrane. In terms of biological role, could be involved in insertion of integral membrane proteins into the membrane. The sequence is that of Putative membrane protein insertion efficiency factor from Lactobacillus helveticus (strain DPC 4571).